Reading from the N-terminus, the 545-residue chain is Glucose-6-phosphate isomerase (545 aa).

E351 (proton donor) is an active-site residue. Catalysis depends on residues H382 and K510.

This sequence belongs to the GPI family.

The protein localises to the cytoplasm. It catalyses the reaction alpha-D-glucose 6-phosphate = beta-D-fructose 6-phosphate. It functions in the pathway carbohydrate biosynthesis; gluconeogenesis. Its pathway is carbohydrate degradation; glycolysis; D-glyceraldehyde 3-phosphate and glycerone phosphate from D-glucose: step 2/4. In terms of biological role, catalyzes the reversible isomerization of glucose-6-phosphate to fructose-6-phosphate. This is Glucose-6-phosphate isomerase from Helicobacter pylori (strain J99 / ATCC 700824) (Campylobacter pylori J99).